We begin with the raw amino-acid sequence, 238 residues long: MEESRADGRNPNQLRPFSCTRNPLDRAHGSARWAQGDTIVLAAVYGPKPGTRKGENPEKASIEVVWKPMTGQIGKQEKEYEMTLKRTLQSICLLTVHPNTTTSVILQVVGNDGSLLPCAINACCAALVFAGIPLKHLAVAIGCGVLEDGEVILDTNKAEEQQLKSFAHLVFPNSRKSASSKEPNQKEEDSERGLITSITHGVMSEEDYFSCIERGLAASSRISDFMRTTLQKQAPGDV.

The tract at residues 174–194 is disordered; the sequence is SRKSASSKEPNQKEEDSERGL. Positions 183-192 are enriched in basic and acidic residues; sequence PNQKEEDSER.

It belongs to the RNase PH family. As to quaternary structure, homodimer or monomer when reduced or oxidized, respectively. Component of the exosome core complex.

Its subcellular location is the nucleus. The protein localises to the nucleolus. In terms of biological role, probable component of the exosome 3'-&gt;5' exoribonuclease complex, a complex that degrades inherently unstable mRNAs containing AU-rich elements (AREs) within their 3'-untranslated regions. May form a homodimer separately from exosome complexes and function in DNA cleavage process. Binds double-stranded DNA (dsDNA) and single-stranded RNA (ssRNA), and possesses hydrolytic DNase and phosphorolytic RNase activities in vitro. The protein is Exosome complex exonuclease RRP46 homolog (RRP46) of Oryza sativa subsp. japonica (Rice).